The chain runs to 295 residues: ATP synthase gamma chain (295 aa).

The protein belongs to the ATPase gamma chain family. In terms of assembly, F-type ATPases have 2 components, CF(1) - the catalytic core - and CF(0) - the membrane proton channel. CF(1) has five subunits: alpha(3), beta(3), gamma(1), delta(1), epsilon(1). CF(0) has three main subunits: a, b and c.

It is found in the cell inner membrane. Its function is as follows. Produces ATP from ADP in the presence of a proton gradient across the membrane. The gamma chain is believed to be important in regulating ATPase activity and the flow of protons through the CF(0) complex. The protein is ATP synthase gamma chain of Sulfurovum sp. (strain NBC37-1).